Here is a 298-residue protein sequence, read N- to C-terminus: N-acetylmuramic acid 6-phosphate etherase (298 aa).

Residues 55–218 (IHAQVSGGGR…STGLMIKSGK (164 aa)) enclose the SIS domain. The active-site Proton donor is E83. E114 is a catalytic residue.

Belongs to the GCKR-like family. MurNAc-6-P etherase subfamily. Homodimer.

It catalyses the reaction N-acetyl-D-muramate 6-phosphate + H2O = N-acetyl-D-glucosamine 6-phosphate + (R)-lactate. It participates in amino-sugar metabolism; 1,6-anhydro-N-acetylmuramate degradation. The protein operates within amino-sugar metabolism; N-acetylmuramate degradation. It functions in the pathway cell wall biogenesis; peptidoglycan recycling. In terms of biological role, specifically catalyzes the cleavage of the D-lactyl ether substituent of MurNAc 6-phosphate, producing GlcNAc 6-phosphate and D-lactate. Together with AnmK, is also required for the utilization of anhydro-N-acetylmuramic acid (anhMurNAc) either imported from the medium or derived from its own cell wall murein, and thus plays a role in cell wall recycling. This chain is N-acetylmuramic acid 6-phosphate etherase, found in Shigella flexneri.